The chain runs to 391 residues: Small ribosomal subunit protein bS1 (391 aa).

S1 motif domains lie at 16-90, 108-173, 194-262, and 279-348; these read GDKV…LSRR, NEII…LSRK, GDVI…LSIK, and NDVI…LSIK.

The protein belongs to the bacterial ribosomal protein bS1 family.

Binds mRNA; thus facilitating recognition of the initiation point. It is needed to translate mRNA with a short Shine-Dalgarno (SD) purine-rich sequence. In Staphylococcus aureus (strain N315), this protein is Small ribosomal subunit protein bS1 (rpsA).